The primary structure comprises 148 residues: MLRLLSKRFYCKIATKSNEKATKLYFKQLTHPTKVPQTPVDAEFPDTSASEIQIDTKTIQLLERLSLVDLDSERALATLKSSIQFADKIAHINTDHVRPLYTVLEHQQLQLRNDQVTEGDCRAEVLQNAKVTDEDYYVSPPGNIPLEQ.

Belongs to the GatC family. As to quaternary structure, subunit of the heterotrimeric GatCAB amidotransferase (AdT) complex, composed of A, B and C subunits.

It is found in the mitochondrion. It carries out the reaction L-glutamyl-tRNA(Gln) + L-glutamine + ATP + H2O = L-glutaminyl-tRNA(Gln) + L-glutamate + ADP + phosphate + H(+). Functionally, allows the formation of correctly charged Gln-tRNA(Gln) through the transamidation of misacylated Glu-tRNA(Gln) in the mitochondria. The reaction takes place in the presence of glutamine and ATP through an activated gamma-phospho-Glu-tRNA(Gln). The protein is Glutamyl-tRNA(Gln) amidotransferase subunit C, mitochondrial of Drosophila sechellia (Fruit fly).